The chain runs to 478 residues: Keratin, type II cytoskeletal 8 (478 aa).

The segment at 1 to 97 (MSIRVTQKSY…DPNIQAVRTQ (97 aa)) is head. Position 9 is a phosphoserine; by PKC/PRKCE (Ser9). Lys11 is covalently cross-linked (Glycyl lysine isopeptide (Lys-Gly) (interchain with G-Cter in SUMO2)). Phosphoserine occurs at positions 13, 15, 21, and 22. The disordered stretch occupies residues 16–44 (APRSFSSRSYTSGPGSRISSSAFSRVGSS). Arg23 carries the omega-N-methylarginine modification. Ser24 bears the Phosphoserine; by PKC/PRKCE mark. Thr26 bears the Phosphothreonine mark. Ser27 and Ser31 each carry phosphoserine. Position 32 is an omega-N-methylarginine (Arg32). Residues Ser34 and Ser39 each carry the phosphoserine modification. Arg40 carries the post-translational modification Omega-N-methylarginine. Ser43 and Ser44 each carry phosphoserine. Arg48 carries the asymmetric dimethylarginine; alternate modification. Arg48 bears the Omega-N-methylarginine; alternate mark. Position 81 is a phosphoserine; by MAPK (Ser81). Positions 98–133 (EKEQIKTLNNKFASFIDKVRHLEQQNKVLETKWNLL) are coil 1A. In terms of domain architecture, IF rod spans 98–409 (EKEQIKTLNN…KLLEGEESRL (312 aa)). Lys108 is subject to N6-malonyllysine. Residues Lys129 and Lys137 each participate in a glycyl lysine isopeptide (Lys-Gly) (interchain with G-Cter in SUMO2) cross-link. A linker 1 region spans residues 134–150 (QQQKTARSNIDNMFESY). The tract at residues 151-242 (INNLRRQLET…QLYEEEIREM (92 aa)) is coil 1B. A Glycyl lysine isopeptide (Lys-Gly) (interchain with G-Cter in SUMO1); alternate cross-link involves residue Lys204. Residue Lys204 forms a Glycyl lysine isopeptide (Lys-Gly) (interchain with G-Cter in SUMO2); alternate linkage. At Lys214 the chain carries N6-acetyllysine. The residue at position 235 (Tyr235) is a Phosphotyrosine. The tract at residues 243–266 (QSQISDTSVVLEMDNNRNLDLDGI) is linker 12. The segment at 267–405 (IAEVKAQYEE…ATYRKLLEGE (139 aa)) is coil 2. Residues 268–389 (AEVKAQYEEI…EYQELMNVKL (122 aa)) form a necessary for interaction with PNN region. Lys271 participates in a covalent cross-link: Glycyl lysine isopeptide (Lys-Gly) (interchain with G-Cter in SUMO2). Residue Ser281 is modified to Phosphoserine. Residue Lys292 forms a Glycyl lysine isopeptide (Lys-Gly) (interchain with G-Cter in SUMO2) linkage. Residue Lys302 forms a Glycyl lysine isopeptide (Lys-Gly) (interchain with G-Cter in SUMO2); alternate linkage. Lys302 carries the post-translational modification N6-acetyllysine; alternate. Residue Lys311 forms a Glycyl lysine isopeptide (Lys-Gly) (interchain with G-Cter in SUMO2) linkage. Lys332 is covalently cross-linked (Glycyl lysine isopeptide (Lys-Gly) (interchain with G-Cter in SUMO2); alternate). Lys332 bears the N6-acetyllysine; alternate mark. Position 337 is a phosphoserine (Ser337). A Glycyl lysine isopeptide (Lys-Gly) (interchain with G-Cter in SUMO2) cross-link involves residue Lys400. The tail stretch occupies residues 406 to 478 (ESRLESGMQN…VSESSDVLSK (73 aa)). Phosphoserine is present on residues Ser407, Ser411, Ser417, Ser424, and Ser433. Residue Lys467 forms a Glycyl lysine isopeptide (Lys-Gly) (interchain with G-Cter in SUMO1); alternate linkage. A Glycyl lysine isopeptide (Lys-Gly) (interchain with G-Cter in SUMO2); alternate cross-link involves residue Lys467. Phosphoserine is present on residues Ser470, Ser472, Ser473, and Ser477.

Belongs to the intermediate filament family. As to quaternary structure, heterotetramer of two type I and two type II keratins. Forms a heterodimer with KRT18. Associates with KRT20. Interacts with PNN. When associated with KRT19, interacts with DMD. Interacts with TCHP. Interacts with APEX1. Interacts with GPER1. Interacts with EPPK1. Interacts with PKP1 and PKP2. O-glycosylated. O-GlcNAcylation at multiple sites increases solubility, and decreases stability by inducing proteasomal degradation. Post-translationally, O-glycosylated (O-GlcNAcylated), in a cell cycle-dependent manner. In terms of tissue distribution, expressed in bladder, liver, exocervix and (in very low amounts) esophagus.

It is found in the cytoplasm. It localises to the nucleus. The protein resides in the nucleoplasm. The protein localises to the nucleus matrix. Functionally, together with KRT19, helps to link the contractile apparatus to dystrophin at the costameres of striated muscle. This chain is Keratin, type II cytoskeletal 8 (KRT8), found in Bos taurus (Bovine).